The following is a 352-amino-acid chain: MFEKSTWIRLPRNVVVGHGVLDDAVEVVRDTHLTGRPLVVTSPTPKTVAAENVVAQFEAVGDDPAVVVVEEATFNSVERVLGEAEAVDPGYLVGVGGGKAIDIAKLASDHLNVGFVSVPTAASHDGIVSGRGSVPEGDTRHSVSAAPPLAVIADTGVIADAPWELTTAGCADIISNYTAVKDWRLANRLQHVPYSEYAGALSQMTAEMLVDNAANIKPELEESAWVVVKALVSSGVAMSIADSSRPASGSEHLFSHQLDRIAPGKALHGHQVGVGSILAEYLHSGQEGQWMAVRDALASLDAPTTADELGVADDEVLAALTSAHEIRDRYTILGGGISEVAAREAASRTGVI.

NAD(+) contacts are provided by residues 98-102 (GKAID) and 120-123 (TAAS). D125 is a binding site for substrate. NAD(+) is bound at residue S129. Substrate is bound at residue D172. 2 residues coordinate Zn(2+): D172 and H252. A substrate-binding site is contributed by H256. A Zn(2+)-binding site is contributed by H268.

The protein belongs to the glycerol-1-phosphate dehydrogenase family. Zn(2+) is required as a cofactor.

The protein localises to the cytoplasm. It catalyses the reaction sn-glycerol 1-phosphate + NAD(+) = dihydroxyacetone phosphate + NADH + H(+). The catalysed reaction is sn-glycerol 1-phosphate + NADP(+) = dihydroxyacetone phosphate + NADPH + H(+). It functions in the pathway membrane lipid metabolism; glycerophospholipid metabolism. Functionally, catalyzes the NAD(P)H-dependent reduction of dihydroxyacetonephosphate (DHAP or glycerone phosphate) to glycerol 1-phosphate (G1P). The G1P thus generated is used as the glycerophosphate backbone of phospholipids in the cellular membranes of Archaea. In Halobacterium salinarum (strain ATCC 29341 / DSM 671 / R1), this protein is Glycerol-1-phosphate dehydrogenase [NAD(P)+].